The following is a 136-amino-acid chain: Cytochrome c oxidase subunit 13, mitochondrial (136 aa).

A mitochondrion-targeting transit peptide spans 1-29 (MFAQRQMFFARLAANLRAPAVRQTVQRRF). Residues 30–62 (ASTPANESGKNAFVREREAVKQHAAETTELWRK) lie on the Mitochondrial matrix side of the membrane. A helical membrane pass occupies residues 63–83 (ISLYGIPPALALAGYNAYTLY). Over 84–136 (NEHWEHWSHLPPLEERTEYPYQNIRTRNYPWGDGDKTLFWNESVNYHNRDKVT) the chain is Mitochondrial intermembrane.

The protein belongs to the cytochrome c oxidase subunit 6A family. Component of the cytochrome c oxidase (complex IV, CIV), a multisubunit enzyme composed of 11 subunits. The complex is composed of a catalytic core of 3 subunits Cox1, Cox2 and Cox3, encoded in the mitochondrial DNA, and 8 supernumerary subunits Cox4, Cox5a/Cox5, Cox6, Cox7, Cox8, Cox7a/Cox9, Cox6b/Cox12 and Cox6a/Cox13, which are encoded in the nuclear genome. The complex exists as a monomer or a dimer and forms respiratory supercomplexes (SCs) in the inner mitochondrial membrane with NADH-ubiquinone oxidoreductase (complex I, CI) and ubiquinol-cytochrome c oxidoreductase (cytochrome b-c1 complex, complex III, CIII), resulting in various different assemblies (supercomplexes I(1)IV(1), I(1)III(3)IV(2), III(2)IV(1) and III(2)IV(2) as well as larger supercomplexes of compositions like I(1)III(2)IV(5-6)). Cox6a/Cox13 was not present in the cryo-EM structure. It may be involved in complex IV dimer formation and might not be always expressed. This would explain its absence in the map of the isolated monomer.

It is found in the mitochondrion inner membrane. It functions in the pathway energy metabolism; oxidative phosphorylation. Functionally, component of the cytochrome c oxidase, the last enzyme in the mitochondrial electron transport chain which drives oxidative phosphorylation. The respiratory chain contains 3 multisubunit complexes succinate dehydrogenase (complex II, CII), ubiquinol-cytochrome c oxidoreductase (cytochrome b-c1 complex, complex III, CIII) and cytochrome c oxidase (complex IV, CIV), that cooperate to transfer electrons derived from NADH and succinate to molecular oxygen, creating an electrochemical gradient over the inner membrane that drives transmembrane transport and the ATP synthase. Cytochrome c oxidase is the component of the respiratory chain that catalyzes the reduction of oxygen to water. Electrons originating from reduced cytochrome c in the intermembrane space (IMS) are transferred via the dinuclear copper A center (CU(A)) of Cox2 and heme A of Cox1 to the active site in Cox1, a binuclear center (BNC) formed by heme A3 and copper B (CU(B)). The BNC reduces molecular oxygen to 2 water molecules using 4 electrons from cytochrome c in the IMS and 4 protons from the mitochondrial matrix. The chain is Cytochrome c oxidase subunit 13, mitochondrial (eat-5) from Neurospora crassa (strain ATCC 24698 / 74-OR23-1A / CBS 708.71 / DSM 1257 / FGSC 987).